The primary structure comprises 1038 residues: Ras GTPase-activating protein 1 (1038 aa).

N-acetylmethionine is present on Met1. Low complexity predominate over residues 1–16 (MMAAEAGSEEGGPATA). 2 disordered regions span residues 1–24 (MMAA…AAAT) and 117–152 (ETLG…SLDG). Residues 124–135 (GFPPLPPPPLLP) show a composition bias toward pro residues. One can recognise an SH2 1 domain in the interval 172-263 (WYHGKLDRTI…LKGEKLLYPV (92 aa)). One can recognise an SH3 domain in the interval 270-332 (EDRRRVRAIL…VEDLVEEVGR (63 aa)). The 91-residue stretch at 342 to 432 (WFHGKISKQE…VEGYYLKEPV (91 aa)) folds into the SH2 2 domain. A PH domain is found at 465–568 (NIVKKGYLLK…WMKGLQAFCS (104 aa)). A C2 domain is found at 568-681 (SLRKSSPGTS…QKGHATDEWF (114 aa)). A Phosphotyrosine modification is found at Tyr606. The 211-residue stretch at 755–965 (KLESLLLCTL…HRMIMFLDEL (211 aa)) folds into the Ras-GAP domain. Ser822 is subject to Phosphoserine.

In terms of assembly, interacts with SQSTM1. Interacts with SPSB1; the interaction does not promote degradation. Interacts with CAV2 (tyrosine phosphorylated form). Directly interacts with NCK1. Interacts with PDGFRB (tyrosine phosphorylated). Interacts (via SH2 domain) with the 'Tyr-9' phosphorylated form of PDPK1. Interacts with tyrosine-phosphorylated EPHB4. Post-translationally, phosphorylated by SRC and LCK. The phosphorylation SRC inhibits its ability to stimulate the Ras-GTPase activity, whereas phosphorylation by LCK does not display any effect on stimulation activity.

The protein resides in the cytoplasm. Functionally, inhibitory regulator of the Ras-cyclic AMP pathway. Stimulates the GTPase of normal but not oncogenic Ras p21. In Rattus norvegicus (Rat), this protein is Ras GTPase-activating protein 1 (Rasa1).